We begin with the raw amino-acid sequence, 490 residues long: GTPase Der (490 aa).

EngA-type G domains are found at residues 3–166 (PVVA…MDDV) and 203–376 (IKLA…DSST). GTP is bound by residues 9–16 (GRPNVGKS), 56–60 (DTGGI), 118–121 (NKTD), 209–216 (GRPNVGKS), 256–260 (DTAGV), and 321–324 (NKWD). The region spanning 377-461 (RRVSTAMLTR…PIRIQFKEGE (85 aa)) is the KH-like domain.

The protein belongs to the TRAFAC class TrmE-Era-EngA-EngB-Septin-like GTPase superfamily. EngA (Der) GTPase family. Associates with the 50S ribosomal subunit.

In terms of biological role, GTPase that plays an essential role in the late steps of ribosome biogenesis. In Salmonella enteritidis PT4 (strain P125109), this protein is GTPase Der.